Here is a 171-residue protein sequence, read N- to C-terminus: Allophycocyanin subunit beta-18 (171 aa).

An N4-methylasparagine modification is found at Asn-72. Cys-82 contacts (2R,3E)-phycocyanobilin.

It belongs to the phycobiliprotein family. In terms of assembly, heterodimer of an alpha and a beta chain. In terms of processing, contains one covalently linked bilin chromophore.

It localises to the plastid. Its subcellular location is the chloroplast thylakoid membrane. Its function is as follows. Light-harvesting photosynthetic bile pigment-protein from the phycobiliprotein complex. Allophycocyanin has a maximum absorption at approximately 650 nanometers. In Aglaothamnion neglectum (Red alga), this protein is Allophycocyanin subunit beta-18 (apcF).